The following is a 445-amino-acid chain: GTPase Der (445 aa).

2 consecutive EngA-type G domains span residues P3–Q167 and V180–M353. Residues G9–S16, D56–F60, N119–E122, G186–S193, D233–L237, and N298–D301 each bind GTP. The 85-residue stretch at A354–T438 folds into the KH-like domain.

It belongs to the TRAFAC class TrmE-Era-EngA-EngB-Septin-like GTPase superfamily. EngA (Der) GTPase family. In terms of assembly, associates with the 50S ribosomal subunit.

Functionally, GTPase that plays an essential role in the late steps of ribosome biogenesis. This chain is GTPase Der, found in Paraburkholderia phytofirmans (strain DSM 17436 / LMG 22146 / PsJN) (Burkholderia phytofirmans).